A 152-amino-acid chain; its full sequence is Methylglyoxal synthase (152 aa).

One can recognise an MGS-like domain in the interval 5–152 (TRTVQAQKHI…YQLYLQQRLK (148 aa)). Substrate contacts are provided by residues His19, Lys23, 45 to 48 (TGTT), and 65 to 66 (SG). The Proton donor/acceptor role is filled by Asp71. Substrate is bound at residue His98.

This sequence belongs to the methylglyoxal synthase family.

It catalyses the reaction dihydroxyacetone phosphate = methylglyoxal + phosphate. Catalyzes the formation of methylglyoxal from dihydroxyacetone phosphate. The chain is Methylglyoxal synthase from Erwinia tasmaniensis (strain DSM 17950 / CFBP 7177 / CIP 109463 / NCPPB 4357 / Et1/99).